The sequence spans 427 residues: Enolase (427 aa).

Glutamine 163 serves as a coordination point for (2R)-2-phosphoglycerate. Glutamate 205 acts as the Proton donor in catalysis. Residues aspartate 242, glutamate 285, and aspartate 312 each contribute to the Mg(2+) site. Residues lysine 337, arginine 366, serine 367, and lysine 388 each contribute to the (2R)-2-phosphoglycerate site. The Proton acceptor role is filled by lysine 337.

The protein belongs to the enolase family. The cofactor is Mg(2+).

It localises to the cytoplasm. It is found in the secreted. The protein resides in the cell surface. The enzyme catalyses (2R)-2-phosphoglycerate = phosphoenolpyruvate + H2O. It participates in carbohydrate degradation; glycolysis; pyruvate from D-glyceraldehyde 3-phosphate: step 4/5. Functionally, catalyzes the reversible conversion of 2-phosphoglycerate (2-PG) into phosphoenolpyruvate (PEP). It is essential for the degradation of carbohydrates via glycolysis. This Burkholderia orbicola (strain MC0-3) protein is Enolase.